The primary structure comprises 98 residues: NADH-ubiquinone oxidoreductase chain 4L (98 aa).

The next 3 helical transmembrane spans lie at 1-21 (MSMV…GLLI), 29-49 (SLLC…VTIL), and 61-81 (IILL…LVMV).

The protein belongs to the complex I subunit 4L family. Core subunit of respiratory chain NADH dehydrogenase (Complex I) which is composed of 45 different subunits.

Its subcellular location is the mitochondrion inner membrane. The enzyme catalyses a ubiquinone + NADH + 5 H(+)(in) = a ubiquinol + NAD(+) + 4 H(+)(out). Its function is as follows. Core subunit of the mitochondrial membrane respiratory chain NADH dehydrogenase (Complex I) which catalyzes electron transfer from NADH through the respiratory chain, using ubiquinone as an electron acceptor. Part of the enzyme membrane arm which is embedded in the lipid bilayer and involved in proton translocation. This chain is NADH-ubiquinone oxidoreductase chain 4L (MT-ND4L), found in Taxidea taxus (American badger).